The primary structure comprises 1190 residues: PAN2-PAN3 deadenylation complex catalytic subunit PAN2 (1190 aa).

WD repeat units lie at residues 24–63, 129–166, 167–207, 222–264, 266–306, and 322–361; these read TTIV…NSLY, NKFN…PNVL, SSFD…TMKT, GNYI…AIAP, PFPA…NVYL, and NNKP…KDFV. The linker stretch occupies residues 364–511; that stretch reads PQPVEQPDII…FQYKFQGKLN (148 aa). The region spanning 512–924 is the USP domain; it reads KVPNCYSRLQ…KPIVIMYQQT (413 aa). In terms of domain architecture, Exonuclease spans 988–1158; sequence VAIDAEFVML…EDANTALLLY (171 aa). The a divalent metal cation site is built by Asp991, Glu993, Asp1097, and Asp1150.

It belongs to the peptidase C19 family. PAN2 subfamily. As to quaternary structure, forms a heterotrimer with an asymmetric homodimer of the regulatory subunit PAN3 to form the poly(A)-nuclease (PAN) deadenylation complex. The cofactor is a divalent metal cation.

It is found in the cytoplasm. The enzyme catalyses Exonucleolytic cleavage of poly(A) to 5'-AMP.. Positively regulated by the regulatory subunit PAN3. Catalytic subunit of the poly(A)-nuclease (PAN) deadenylation complex, one of two cytoplasmic mRNA deadenylases involved in mRNA turnover. PAN specifically shortens poly(A) tails of RNA and the activity is stimulated by poly(A)-binding protein PAB1. PAN deadenylation is followed by rapid degradation of the shortened mRNA tails by the CCR4-NOT complex. Deadenylated mRNAs are then degraded by two alternative mechanisms, namely exosome-mediated 3'-5' exonucleolytic degradation, or deadenylation-dependent mRNA decaping and subsequent 5'-3' exonucleolytic degradation by XRN1. May also be involved in post-transcriptional maturation of mRNA poly(A) tails. The sequence is that of PAN2-PAN3 deadenylation complex catalytic subunit PAN2 from Candida albicans (strain SC5314 / ATCC MYA-2876) (Yeast).